The primary structure comprises 357 residues: Protein-L-isoaspartate O-methyltransferase domain-containing protein 1 (357 aa).

Glycine 2 carries the N-myristoyl glycine lipid modification. Serine 64 is a catalytic residue. AdoMet binding motif regions lie at residues 85 to 94 (LNLGSGTGYL), 160 to 164 (YDRIY), and 181 to 191 (LKVGGILVMPI). Residues 240–250 (VRNLQDLARIY) form a BC-box region. Residues 299–331 (PLDSEEDEKMEEDSKEEEEKEHIEAMKREEPPQ) are disordered. A compositionally biased stretch (acidic residues) spans 301 to 317 (DSEEDEKMEEDSKEEEE). The segment covering 318 to 331 (KEHIEAMKREEPPQ) has biased composition (basic and acidic residues). Residues 341–344 (LPLP) form a CUL-box region.

This sequence belongs to the methyltransferase superfamily. L-isoaspartyl/D-aspartyl protein methyltransferase family. Component of the probable ECS(PCMTD1) E3 ubiquitin-protein ligase complex, at least composed of CUL5, ELOB, ELOC, RBX2 and PCMTD1. Interacts (via the BC-box) with ELOB and ELOC; the interaction is direct and stabilizes PCMTD1.

The protein localises to the cytoplasm. The protein resides in the membrane. In terms of biological role, substrate recognition component of an ECS (Elongin BC-CUL5-SOCS-box protein) E3 ubiquitin ligase complex which mediates the ubiquitination and subsequent proteasomal degradation of target proteins. Specifically binds to the methyltransferase cofactor S-adenosylmethionine (AdoMet) via the N-terminal AdoMet binding motif, but does not display methyltransferase activity. May provide an alternate maintenance pathway for modified proteins by acting as a damage-specific E3 ubiquitin ligase adaptor protein. In Mus musculus (Mouse), this protein is Protein-L-isoaspartate O-methyltransferase domain-containing protein 1 (Pcmtd1).